A 720-amino-acid chain; its full sequence is Ornithine decarboxylase (720 aa).

K354 is modified (N6-(pyridoxal phosphate)lysine).

Belongs to the Orn/Lys/Arg decarboxylase class-I family. Pyridoxal 5'-phosphate serves as cofactor.

It catalyses the reaction L-ornithine + H(+) = putrescine + CO2. The chain is Ornithine decarboxylase (speF) from Haemophilus influenzae (strain ATCC 51907 / DSM 11121 / KW20 / Rd).